Consider the following 388-residue polypeptide: GDP-4-keto-6-deoxy-D-mannose 3-dehydratase (388 aa).

26–29 (KMFT) contributes to the GDP-4-dehydro-alpha-D-rhamnose binding site. The helical transmembrane segment at 49–69 (YAVMVSSGSTANLLMIAALFF) threads the bilayer. Pyridoxal 5'-phosphate-binding positions include 56–57 (GS), Trp88, Glu162, and Ser183. Catalysis depends on His188, which acts as the Proton donor/acceptor. His215 contributes to the L-glutamate binding site. Arg219 contributes to the GDP-4-dehydro-alpha-D-rhamnose binding site. Asn248 provides a ligand contact to pyridoxal 5'-phosphate. Position 250 (Arg250) interacts with L-glutamate. Residue Glu329 participates in GDP-4-dehydro-alpha-D-rhamnose binding.

It belongs to the DegT/DnrJ/EryC1 family. Homodimer. Pyridoxal 5'-phosphate serves as cofactor.

It localises to the cell membrane. It carries out the reaction GDP-4-dehydro-alpha-D-rhamnose + L-glutamate = GDP-4-dehydro-3,6-dideoxy-alpha-D-mannose + 2-oxoglutarate + NH4(+). It participates in nucleotide-sugar metabolism; GDP-L-colitose biosynthesis. Functionally, involved in the biosynthesis of L-colitose, a 3,6-dideoxyhexose present in the O-antigen region of lipopolysaccharides (LPS), where it serves as an antigenic determinant and is vital for bacterial defense and survival. Catalyzes the removal of the C3'-hydroxyl group from GDP-4-keto-6-deoxy-D-mannose via a combined transamination-deoxygenation reaction. The catalysis is initiated by a transamination step in which pyridoxal 5'-phosphate (PLP) is converted to pyridoxamine 5'-phosphate (PMP) in the presence of L-glutamate. This coenzyme then forms a Schiff base with GDP-4-keto-6-deoxy-D-mannose and the resulting adduct undergoes a PMP-mediated beta-dehydration reaction to give a sugar enamine intermediate, which after tautomerization and hydrolysis to release ammonia yields GDP-4-keto-3,6-dideoxy-D-mannose as a product. In vitro, is able to catalyze the formation of GDP-4-keto-3,6-dideoxymannose using GDP-perosamine rather than GDP-4-keto-6-deoxymannose as a substrate, with no need of glutamate. This chain is GDP-4-keto-6-deoxy-D-mannose 3-dehydratase, found in Escherichia coli O55:H7 (strain CB9615 / EPEC).